Consider the following 411-residue polypeptide: Tubulin beta-2 chain (411 aa).

7 residues coordinate GTP: E37, S106, G110, T111, G112, N172, and N194. Residue E37 coordinates Mg(2+). A disordered region spans residues 392 to 411 (QYQDATAEPEGXYEEDYDEA). Residues 402-411 (GXYEEDYDEA) are compositionally biased toward acidic residues.

This sequence belongs to the tubulin family. In terms of assembly, dimer of alpha and beta chains. A typical microtubule is a hollow water-filled tube with an outer diameter of 25 nm and an inner diameter of 15 nM. Alpha-beta heterodimers associate head-to-tail to form protofilaments running lengthwise along the microtubule wall with the beta-tubulin subunit facing the microtubule plus end conferring a structural polarity. Microtubules usually have 13 protofilaments but different protofilament numbers can be found in some organisms and specialized cells. Mg(2+) serves as cofactor.

It is found in the cytoplasm. The protein resides in the cytoskeleton. Functionally, tubulin is the major constituent of microtubules, a cylinder consisting of laterally associated linear protofilaments composed of alpha- and beta-tubulin heterodimers. Microtubules grow by the addition of GTP-tubulin dimers to the microtubule end, where a stabilizing cap forms. Below the cap, tubulin dimers are in GDP-bound state, owing to GTPase activity of alpha-tubulin. This chain is Tubulin beta-2 chain (TUBB2), found in Anemia phyllitidis (Fern).